Reading from the N-terminus, the 570-residue chain is Carotenoid cleavage dioxygenase 8, chloroplastic (570 aa).

A chloroplast-targeting transit peptide spans 1–56; the sequence is MASLITTKAMMSHHHVLSSTRITTLYSDNSIGDQQIKTKPQVPHRLFARRIFGVTR. H254, H305, H372, and H563 together coordinate Fe cation.

It belongs to the carotenoid oxygenase family. The cofactor is Fe(2+). In terms of tissue distribution, expressed in flowers, siliques, inflorescence stems, petiole and leaves, and at a much higher level in roots.

It is found in the plastid. It localises to the chloroplast. It catalyses the reaction 9-cis-10'-apo-beta-carotenal + 2 O2 = (2E,4E,6E)-7-hydroxy-4-methylhepta-2,4,6-trienal + (11R)-carlactone. The catalysed reaction is all-trans-10'-apo-beta-carotenal + O2 = (2E,4E,6E)-4-methylocta-2,4,6-trienedial + 13-apo-beta-carotenone. In terms of biological role, involved in strigolactones biosynthesis by cleaving the C(27) 9-cis-10'-apo-beta-carotenal produced by CCD7. Produces the C(19) carlactone and a C(8) hydroxyaldehyde. Also shows lower activity with all-trans-10'-apo-beta-carotenal producing a C(9) dialdehyde and the C(18) 13-apo-beta-carotenone. Strigolactones are hormones that inhibit tillering and shoot branching through the MAX-dependent pathway, contribute to the regulation of shoot architectural response to phosphate-limiting conditions and function as rhizosphere signal that stimulates hyphal branching of arbuscular mycorrhizal fungi and trigger seed germination of root parasitic weeds. Also active on other carotenoid substrates like licopene or zeaxanthin. In Arabidopsis thaliana (Mouse-ear cress), this protein is Carotenoid cleavage dioxygenase 8, chloroplastic.